The chain runs to 122 residues: Large ribosomal subunit protein bL12 (122 aa).

The protein belongs to the bacterial ribosomal protein bL12 family. Homodimer. Part of the ribosomal stalk of the 50S ribosomal subunit. Forms a multimeric L10(L12)X complex, where L10 forms an elongated spine to which 2 to 4 L12 dimers bind in a sequential fashion. Binds GTP-bound translation factors.

Functionally, forms part of the ribosomal stalk which helps the ribosome interact with GTP-bound translation factors. Is thus essential for accurate translation. The sequence is that of Large ribosomal subunit protein bL12 from Vibrio campbellii (strain ATCC BAA-1116).